Here is a 489-residue protein sequence, read N- to C-terminus: RNA polymerase II subunit 5-mediating protein homolog (489 aa).

Disordered regions lie at residues 141-188 (NSDE…MDEE), 200-329 (EEKE…EEDE), 396-415 (ILKT…SYNE), and 434-489 (FENQ…RQNK). Residues 157 to 168 (QKSTTTTTTTTT) show a composition bias toward low complexity. Composition is skewed to basic and acidic residues over residues 169–188 (SKDK…MDEE) and 215–224 (FNKKFNKKLD). Acidic residues-rich tracts occupy residues 227–265 (GSDE…EDEK), 276–298 (EEDD…EYYD), and 315–329 (QGDD…EEDE). The span at 396 to 413 (ILKTNSSGNLMSTIPKSY) shows a compositional bias: polar residues. Positions 480 to 489 (SRFKSSRQNK) are enriched in basic residues.

Belongs to the RNA polymerase II subunit 5-mediating protein family.

The protein resides in the nucleus. This is RNA polymerase II subunit 5-mediating protein homolog (rmp) from Dictyostelium discoideum (Social amoeba).